The sequence spans 278 residues: Shikimate dehydrogenase (NADP(+)) (278 aa).

Shikimate-binding positions include 19-21 and Thr-66; that span reads SLS. Lys-70 serves as the catalytic Proton acceptor. Asp-82 is a binding site for NADP(+). The shikimate site is built by Asn-91 and Asp-107. NADP(+)-binding positions include 133 to 137, 157 to 162, and Ile-222; these read GSGGA and NRTRAR. Tyr-224 contacts shikimate. Gly-245 contacts NADP(+).

This sequence belongs to the shikimate dehydrogenase family. Homodimer.

The catalysed reaction is shikimate + NADP(+) = 3-dehydroshikimate + NADPH + H(+). The protein operates within metabolic intermediate biosynthesis; chorismate biosynthesis; chorismate from D-erythrose 4-phosphate and phosphoenolpyruvate: step 4/7. Functionally, involved in the biosynthesis of the chorismate, which leads to the biosynthesis of aromatic amino acids. Catalyzes the reversible NADPH linked reduction of 3-dehydroshikimate (DHSA) to yield shikimate (SA). The polypeptide is Shikimate dehydrogenase (NADP(+)) (Jannaschia sp. (strain CCS1)).